The following is a 79-amino-acid chain: Defensin-like protein 109 (79 aa).

The signal sequence occupies residues 1–24 (MDFTKKILVVFAFTIMLGISSVHC). 4 disulfides stabilise this stretch: Cys41–Cys76, Cys47–Cys68, Cys54–Cys74, and Cys58–Cys75.

It belongs to the DEFL family.

Its subcellular location is the secreted. This Arabidopsis thaliana (Mouse-ear cress) protein is Defensin-like protein 109.